Consider the following 113-residue polypeptide: Protein FPV195 (113 aa).

It belongs to the poxviruses A31 family.

This chain is Protein FPV195, found in Vertebrata (FPV).